Consider the following 1197-residue polypeptide: PAN2-PAN3 deadenylation complex catalytic subunit PAN2 (1197 aa).

4 WD repeats span residues 153-193 (DEAE…QKYT), 195-231 (EVPG…VEHE), 244-280 (VHGN…ATTP), and 328-367 (TVGP…TFNT). The linker stretch occupies residues 368–485 (YSRETDFALP…IGREEEPHLY (118 aa)). In terms of domain architecture, USP spans 486-919 (MVAKKYRKVT…VPAILYYARR (434 aa)). One can recognise an Exonuclease domain in the interval 970–1142 (VGLDAEFVTL…EDARTALQLY (173 aa)). 4 residues coordinate a divalent metal cation: D973, E975, D1082, and D1134. A disordered region spans residues 1176–1197 (VPEPDSQSSPKHGAVFPPVLAL).

This sequence belongs to the peptidase C19 family. PAN2 subfamily. As to quaternary structure, forms a heterotrimer with an asymmetric homodimer of the regulatory subunit PAN3 to form the poly(A)-nuclease (PAN) deadenylation complex. Requires a divalent metal cation as cofactor.

The protein resides in the cytoplasm. It localises to the P-body. Its subcellular location is the nucleus. The catalysed reaction is Exonucleolytic cleavage of poly(A) to 5'-AMP.. Its activity is regulated as follows. Positively regulated by the regulatory subunit PAN3. In terms of biological role, catalytic subunit of the poly(A)-nuclease (PAN) deadenylation complex, one of two cytoplasmic mRNA deadenylases involved in general and miRNA-mediated mRNA turnover. PAN specifically shortens poly(A) tails of RNA and the activity is stimulated by poly(A)-binding protein (PABP). PAN deadenylation is followed by rapid degradation of the shortened mRNA tails by the CCR4-NOT complex. Deadenylated mRNAs are then degraded by two alternative mechanisms, namely exosome-mediated 3'-5' exonucleolytic degradation, or deadenylation-dependent mRNA decaping and subsequent 5'-3' exonucleolytic degradation by XRN1. The polypeptide is PAN2-PAN3 deadenylation complex catalytic subunit PAN2 (Gallus gallus (Chicken)).